Consider the following 287-residue polypeptide: 4-diphosphocytidyl-2-C-methyl-D-erythritol kinase (287 aa).

K14 is an active-site residue. 98 to 108 is an ATP binding site; it reads PPGAGLGGGSS. D140 is an active-site residue.

The protein belongs to the GHMP kinase family. IspE subfamily.

It catalyses the reaction 4-CDP-2-C-methyl-D-erythritol + ATP = 4-CDP-2-C-methyl-D-erythritol 2-phosphate + ADP + H(+). It participates in isoprenoid biosynthesis; isopentenyl diphosphate biosynthesis via DXP pathway; isopentenyl diphosphate from 1-deoxy-D-xylulose 5-phosphate: step 3/6. Its function is as follows. Catalyzes the phosphorylation of the position 2 hydroxy group of 4-diphosphocytidyl-2C-methyl-D-erythritol. The polypeptide is 4-diphosphocytidyl-2-C-methyl-D-erythritol kinase (Methylacidiphilum infernorum (isolate V4) (Methylokorus infernorum (strain V4))).